Consider the following 351-residue polypeptide: UDP-N-acetylenolpyruvoylglucosamine reductase (351 aa).

The FAD-binding PCMH-type domain maps to 11 to 213 (GVGGSIACFI…KQVRDQVLRI (203 aa)). The active site involves Arg158. Ser239 (proton donor) is an active-site residue. Glu343 is an active-site residue.

The protein belongs to the MurB family. FAD serves as cofactor.

The protein resides in the cytoplasm. The catalysed reaction is UDP-N-acetyl-alpha-D-muramate + NADP(+) = UDP-N-acetyl-3-O-(1-carboxyvinyl)-alpha-D-glucosamine + NADPH + H(+). It functions in the pathway cell wall biogenesis; peptidoglycan biosynthesis. Its function is as follows. Cell wall formation. The sequence is that of UDP-N-acetylenolpyruvoylglucosamine reductase from Tropheryma whipplei (strain TW08/27) (Whipple's bacillus).